Here is a 386-residue protein sequence, read N- to C-terminus: S-adenosylmethionine synthase (386 aa).

An ATP-binding site is contributed by H16. D18 lines the Mg(2+) pocket. Residue E44 coordinates K(+). L-methionine contacts are provided by E57 and Q100. The tract at residues 100-110 (QSRDITQGVDR) is flexible loop. ATP is bound by residues 165 to 167 (DAK), D240, 246 to 247 (RK), A263, and K267. L-methionine is bound at residue D240. K271 is a binding site for L-methionine.

This sequence belongs to the AdoMet synthase family. As to quaternary structure, homotetramer; dimer of dimers. Mg(2+) is required as a cofactor. K(+) serves as cofactor.

The protein resides in the cytoplasm. The enzyme catalyses L-methionine + ATP + H2O = S-adenosyl-L-methionine + phosphate + diphosphate. Its pathway is amino-acid biosynthesis; S-adenosyl-L-methionine biosynthesis; S-adenosyl-L-methionine from L-methionine: step 1/1. Its function is as follows. Catalyzes the formation of S-adenosylmethionine (AdoMet) from methionine and ATP. The overall synthetic reaction is composed of two sequential steps, AdoMet formation and the subsequent tripolyphosphate hydrolysis which occurs prior to release of AdoMet from the enzyme. This Francisella tularensis subsp. tularensis (strain WY96-3418) protein is S-adenosylmethionine synthase.